The chain runs to 801 residues: Phosphatidylinositol 3-kinase pik3 (801 aa).

One can recognise a C2 PI3K-type domain in the interval 14–166; sequence VTARFLVKFC…RLDGLLLKLQ (153 aa). The 183-residue stretch at 257-439 folds into the PIK helical domain; it reads DKDLKPNSKI…SSVMFLFQKE (183 aa). One can recognise a PI3K/PI4K catalytic domain in the interval 515–785; that stretch reads IPDACTVFKS…LINDSVSALF (271 aa). The tract at residues 521–527 is G-loop; sequence VFKSTMQ. The catalytic loop stretch occupies residues 654–662; that stretch reads GVGDRHLDN. Residues 673–694 form an activation loop region; that stretch reads HADFGYILGRDPKLFSPAMKLS.

This sequence belongs to the PI3/PI4-kinase family. Component of the autophagy-specific vps34 PI3-kinase complex I composed of vps15, atg6, pik3/vps34, atg14 and atg38. Also a component of the VPS34 PI3-kinase complex II composed of atg6, pik3, vps15 and vps38.

The enzyme catalyses a 1,2-diacyl-sn-glycero-3-phospho-(1D-myo-inositol) + ATP = a 1,2-diacyl-sn-glycero-3-phospho-(1D-myo-inositol-3-phosphate) + ADP + H(+). Phosphatidylinositol 3-kinase that functions as a part of the autophagy-specific VPS34 PI3-kinase complex I that plays a role in autophagosome assembly. This complex is essential to recruit the atg8-phosphatidylinositol conjugate and the atg12-atg5 conjugate to the pre-autophagosomal structure. Also functions as part of the VPS34 PI3-kinase complex II. This Schizosaccharomyces pombe (strain 972 / ATCC 24843) (Fission yeast) protein is Phosphatidylinositol 3-kinase pik3 (pik3).